The following is a 159-amino-acid chain: 2-C-methyl-D-erythritol 2,4-cyclodiphosphate synthase (159 aa).

2 residues coordinate a divalent metal cation: Asp10 and His12. Residues 10 to 12 (DVH) and 36 to 37 (HS) each bind 4-CDP-2-C-methyl-D-erythritol 2-phosphate. His44 contributes to the a divalent metal cation binding site. Residues 58–60 (DIG), 134–137 (TTTE), Phe141, and Arg144 each bind 4-CDP-2-C-methyl-D-erythritol 2-phosphate.

Belongs to the IspF family. Homotrimer. A divalent metal cation is required as a cofactor.

The catalysed reaction is 4-CDP-2-C-methyl-D-erythritol 2-phosphate = 2-C-methyl-D-erythritol 2,4-cyclic diphosphate + CMP. It participates in isoprenoid biosynthesis; isopentenyl diphosphate biosynthesis via DXP pathway; isopentenyl diphosphate from 1-deoxy-D-xylulose 5-phosphate: step 4/6. Functionally, involved in the biosynthesis of isopentenyl diphosphate (IPP) and dimethylallyl diphosphate (DMAPP), two major building blocks of isoprenoid compounds. Catalyzes the conversion of 4-diphosphocytidyl-2-C-methyl-D-erythritol 2-phosphate (CDP-ME2P) to 2-C-methyl-D-erythritol 2,4-cyclodiphosphate (ME-CPP) with a corresponding release of cytidine 5-monophosphate (CMP). In Bacteroides thetaiotaomicron (strain ATCC 29148 / DSM 2079 / JCM 5827 / CCUG 10774 / NCTC 10582 / VPI-5482 / E50), this protein is 2-C-methyl-D-erythritol 2,4-cyclodiphosphate synthase.